A 190-amino-acid chain; its full sequence is Peptide methionine sulfoxide reductase A2-2 (190 aa).

The tract at residues 1–20 is disordered; sequence MSNDTGADGGAANPDLGPDA. Residues 10-20 show a composition bias toward low complexity; that stretch reads GAANPDLGPDA.

This sequence belongs to the MsrA Met sulfoxide reductase family.

The protein localises to the cytoplasm. It is found in the cytosol. The catalysed reaction is L-methionyl-[protein] + [thioredoxin]-disulfide + H2O = L-methionyl-(S)-S-oxide-[protein] + [thioredoxin]-dithiol. It catalyses the reaction [thioredoxin]-disulfide + L-methionine + H2O = L-methionine (S)-S-oxide + [thioredoxin]-dithiol. Catalyzes the reduction of methionine sulfoxide (MetSO) to methionine in proteins. Plays a protective role against oxidative stress by restoring activity to proteins that have been inactivated by methionine oxidation. MSRA family specifically reduces the MetSO S-enantiomer. This is Peptide methionine sulfoxide reductase A2-2 (MSRA2-2) from Oryza sativa subsp. japonica (Rice).